The following is a 75-amino-acid chain: Protease B inhibitor 2 (75 aa).

The residue at position 74 (threonine 74) is a Phosphothreonine.

The protein belongs to the protease inhibitor I9 family. In terms of assembly, part of the heterodimeric LMA1 complex together with the thioredoxin II/TRX2. LMA1 binds to the ATPase SEC18.

It is found in the cytoplasm. Cytosolic inhibitor of vacuolar proteinase B (yscB), probably regulating protease B activity during limited proteolysis. PBI2 is a component of the LMA1 complex, which is involved in the facilitation of vesicle fusion such as homotypic vacuole and ER-derived COPII vesicle fusion with the Golgi. In Saccharomyces cerevisiae (strain ATCC 204508 / S288c) (Baker's yeast), this protein is Protease B inhibitor 2 (PBI2).